Consider the following 427-residue polypeptide: MKLQKPKGTQDLLPQDSAKWQYVENFTRSIFKQYNYAEIRTPIFEHYEVISRSVGDTTDIVTKEMYDFYDKGERHITLRPEGTAPVVRSYVENKLFAPEVQKPAKFYYMGPMFRYERPQAGRLRQFHQIGVECFGSNNPATDVETIAMAYHFFEELGIKDIRLHLNSLGNPESRAAYRQALIDYLTPLKEQLSKDSQRRLEENPLRVLDSKEKEDKVAVENAPSILDYLDEESTVHFEAVRSMLDNLGITYTIDTNMVRGLDYYNHTIFEFMTEVGGNDLTICAGGRYDGLVTYFGGPETPAFGFGMGIERLILVLEKQGIELPLDTQLDVYIAVLGQEANGGALDLVQAIRKQGFRAERDYLDRKLKAQFKSADVFGAKAIITLGGSEIESGQVVVKNNQTRSQVETSLEALKTDFASILEELEKQ.

The protein belongs to the class-II aminoacyl-tRNA synthetase family. Homodimer.

The protein localises to the cytoplasm. The enzyme catalyses tRNA(His) + L-histidine + ATP = L-histidyl-tRNA(His) + AMP + diphosphate + H(+). This chain is Histidine--tRNA ligase, found in Streptococcus suis (strain 98HAH33).